A 112-amino-acid chain; its full sequence is Secretoglobin family 2B member 24 (112 aa).

Positions 1–23 are cleaved as a signal peptide; that stretch reads MKGTLLLLALLMIGELGFHTTEA.

Belongs to the secretoglobin family. As to expression, expressed in lacrimal gland, at higher level in males than females.

The protein localises to the secreted. This is Secretoglobin family 2B member 24 (Scgb2b24) from Mus musculus (Mouse).